Here is a 191-residue protein sequence, read N- to C-terminus: UPF0149 protein VV2847 (191 aa).

Belongs to the UPF0149 family.

This is UPF0149 protein VV2847 from Vibrio vulnificus (strain YJ016).